A 312-amino-acid polypeptide reads, in one-letter code: Protein phosphatase PTC7 homolog fig (312 aa).

The PPM-type phosphatase domain maps to 42 to 306 (IQGSSKDQLA…DDITVILASV (265 aa)). Mn(2+) contacts are provided by Asp-83, Gly-84, and Asp-228.

This sequence belongs to the PP2C family. It depends on Mg(2+) as a cofactor. Requires Mn(2+) as cofactor.

It carries out the reaction O-phospho-L-seryl-[protein] + H2O = L-seryl-[protein] + phosphate. It catalyses the reaction O-phospho-L-threonyl-[protein] + H2O = L-threonyl-[protein] + phosphate. This Drosophila mojavensis (Fruit fly) protein is Protein phosphatase PTC7 homolog fig.